The chain runs to 196 residues: Beta-crystallin A4 (196 aa).

T2 is subject to N-acetylthreonine. The interval T2–P11 is N-terminal arm. Beta/gamma crystallin 'Greek key' domains are found at residues W12–S51 and G52–A98. Residues C99 to D104 form a connecting peptide region. 2 consecutive Beta/gamma crystallin 'Greek key' domains span residues S105–S146 and G147–Q195.

Belongs to the beta/gamma-crystallin family. In terms of assembly, homo/heterodimer, or complexes of higher-order. The structure of beta-crystallin oligomers seems to be stabilized through interactions between the N-terminal arms.

Functionally, crystallins are the dominant structural components of the vertebrate eye lens. This chain is Beta-crystallin A4 (CRYBA4), found in Homo sapiens (Human).